A 189-amino-acid polypeptide reads, in one-letter code: Dirigent protein 21 (189 aa).

The first 19 residues, 1-19 (MASLYLLLLLPLFLALILA), serve as a signal peptide directing secretion. Residues Asn72 and Asn173 are each glycosylated (N-linked (GlcNAc...) asparagine).

This sequence belongs to the plant dirigent protein family. As to quaternary structure, homodimer.

The protein localises to the secreted. Dirigent proteins impart stereoselectivity on the phenoxy radical-coupling reaction, yielding optically active lignans from two molecules of coniferyl alcohol in the biosynthesis of lignans, flavonolignans, and alkaloids and thus plays a central role in plant secondary metabolism. The polypeptide is Dirigent protein 21 (DIR21) (Arabidopsis thaliana (Mouse-ear cress)).